Consider the following 306-residue polypeptide: Cell division protein ZipA (306 aa).

The Periplasmic segment spans residues 1-6; sequence MENLQL. A helical transmembrane segment spans residues 7 to 27; that stretch reads VLLLIGAIAIIAVLVHGFWSI. Over 28–306 the chain is Cytoplasmic; the sequence is RKQQPKGYKQ…NYIQRIRAQA (279 aa).

The protein belongs to the ZipA family. In terms of assembly, interacts with FtsZ via their C-terminal domains.

The protein localises to the cell inner membrane. Its function is as follows. Essential cell division protein that stabilizes the FtsZ protofilaments by cross-linking them and that serves as a cytoplasmic membrane anchor for the Z ring. Also required for the recruitment to the septal ring of downstream cell division proteins. The sequence is that of Cell division protein ZipA from Shewanella halifaxensis (strain HAW-EB4).